Here is an 85-residue protein sequence, read N- to C-terminus: HPr-like protein Crh (85 aa).

The HPr domain occupies M1 to V85. S46 is modified (phosphoserine; by HPrK/P).

Belongs to the HPr family. As to quaternary structure, mixture of monomers and homodimers. Interacts with CcpA as a monomer.

Its function is as follows. Along with seryl-phosphorylated HPr, phosphorylated Crh is implicated in carbon catabolite repression (CCR) of levanase, inositol dehydrogenase, and beta-xylosidase. Exerts its effect on CCR by interacting with CcpA. This chain is HPr-like protein Crh (crh), found in Bacillus subtilis (strain 168).